The primary structure comprises 416 residues: Formyl-CoA:oxalate CoA-transferase (416 aa).

Residues 17-18, Arg-38, 72-75, 96-98, His-104, and 137-140 contribute to the CoA site; these read QS, LNTK, NFH, and KAYE. Residue Asp-169 is the Nucleophile of the active site. 248–250 contacts substrate; it reads GGQ. CoA is bound at residue 273–275; that stretch reads QEQ.

The protein belongs to the CoA-transferase III family. Frc subfamily. As to quaternary structure, homodimer.

The catalysed reaction is formyl-CoA + oxalate = oxalyl-CoA + formate. It participates in metabolic intermediate degradation; oxalate degradation; CO(2) and formate from oxalate: step 1/2. In terms of biological role, involved in the catabolism of oxalate and in the adapatation to low pH via the induction of the oxalate-dependent acid tolerance response (ATR). Catalyzes the transfer of the CoA moiety from formyl-CoA to oxalate. This is Formyl-CoA:oxalate CoA-transferase from Escherichia coli O17:K52:H18 (strain UMN026 / ExPEC).